The sequence spans 242 residues: MMKSLYAVNLVLLLLLAFFAPAPATRELNMRAAPSDSTRVVDYATTERLLRAHSSDKEEQKEEEERAISINFSSLEKIFKKVTSAKTTELQGMLKADEALGSAFKTLKLGTMRIGKDGSVDPKMVAKFLSSRNFKIWSQHAVKINKDDPYGEMLKALTNVFGEKNVAMMILVGNLSRNSRDVAKKLEKAQFYKWYFVDKYKTADEVFTNVLKADRNRIHGYGREKEIWGDYAKYVTTTVMKY.

The signal sequence occupies residues 1-24; sequence MMKSLYAVNLVLLLLLAFFAPAPA. The RxLR-dEER signature appears at 48 to 66; the sequence is RLLRAHSSDKEEQKEEEER.

Belongs to the RxLR effector family.

The protein resides in the secreted. The protein localises to the host cell membrane. Functionally, effector that enhances P.infestans colonization of Nicotiana benthamiana leaves. The chain is RxLR effector protein PexRD15 from Phytophthora infestans (strain T30-4) (Potato late blight agent).